Reading from the N-terminus, the 178-residue chain is Transmembrane protein 196 (178 aa).

4 helical membrane passes run 11-31, 47-67, 73-93, and 106-126; these read LLVL…VGAV, SSPV…ILCA, LVMI…ILNF, and LYPL…GCTL.

In terms of tissue distribution, expression is significantly decreased in lung cancer cells compared to normal lung tissue (at protein level).

It is found in the cytoplasm. Its subcellular location is the membrane. Functionally, acts as a tumor suppressor in lung cancer. Inhibits tumor cell growth by inhibiting cell proliferation and migration and promoting cell apoptosis. Inhibits metastasis of lung cancer by suppressing beta-catenin expression in the Wnt/beta-catenin signaling pathway. The sequence is that of Transmembrane protein 196 (TMEM196) from Homo sapiens (Human).